The sequence spans 668 residues: DNA ligase (668 aa).

Residues D32–D36, S81–L82, and E111 each bind NAD(+). The active-site N6-AMP-lysine intermediate is K113. R134, E171, K290, and K314 together coordinate NAD(+). The Zn(2+) site is built by C408, C411, C426, and C432. The region spanning E591 to S668 is the BRCT domain.

The protein belongs to the NAD-dependent DNA ligase family. LigA subfamily. The cofactor is Mg(2+). It depends on Mn(2+) as a cofactor.

It catalyses the reaction NAD(+) + (deoxyribonucleotide)n-3'-hydroxyl + 5'-phospho-(deoxyribonucleotide)m = (deoxyribonucleotide)n+m + AMP + beta-nicotinamide D-nucleotide.. Functionally, DNA ligase that catalyzes the formation of phosphodiester linkages between 5'-phosphoryl and 3'-hydroxyl groups in double-stranded DNA using NAD as a coenzyme and as the energy source for the reaction. It is essential for DNA replication and repair of damaged DNA. The polypeptide is DNA ligase (Shewanella pealeana (strain ATCC 700345 / ANG-SQ1)).